Here is a 202-residue protein sequence, read N- to C-terminus: Holliday junction branch migration complex subunit RuvA (202 aa).

The interval 1-64 (MIGRLRGTLA…EDAQLLYGFA (64 aa)) is domain I. The domain II stretch occupies residues 65–143 (SKRERDFFRE…AWEAVPSMFA (79 aa)). The segment at 144-154 (LVPNQPDAPAP) is flexible linker. A domain III region spans residues 154-202 (PVASAESDAVSALISLGYKPQEASKAVSAIKDKGLSSEDMIRRALKGMI).

This sequence belongs to the RuvA family. Homotetramer. Forms an RuvA(8)-RuvB(12)-Holliday junction (HJ) complex. HJ DNA is sandwiched between 2 RuvA tetramers; dsDNA enters through RuvA and exits via RuvB. An RuvB hexamer assembles on each DNA strand where it exits the tetramer. Each RuvB hexamer is contacted by two RuvA subunits (via domain III) on 2 adjacent RuvB subunits; this complex drives branch migration. In the full resolvosome a probable DNA-RuvA(4)-RuvB(12)-RuvC(2) complex forms which resolves the HJ.

The protein resides in the cytoplasm. In terms of biological role, the RuvA-RuvB-RuvC complex processes Holliday junction (HJ) DNA during genetic recombination and DNA repair, while the RuvA-RuvB complex plays an important role in the rescue of blocked DNA replication forks via replication fork reversal (RFR). RuvA specifically binds to HJ cruciform DNA, conferring on it an open structure. The RuvB hexamer acts as an ATP-dependent pump, pulling dsDNA into and through the RuvAB complex. HJ branch migration allows RuvC to scan DNA until it finds its consensus sequence, where it cleaves and resolves the cruciform DNA. The chain is Holliday junction branch migration complex subunit RuvA from Pseudomonas fluorescens (strain ATCC BAA-477 / NRRL B-23932 / Pf-5).